Here is a 331-residue protein sequence, read N- to C-terminus: Aromatic 2-oxoacid reductase (331 aa).

NAD(+) is bound by residues 154–155 (RI), aspartate 175, 205–206 (AP), asparagine 211, 232–234 (AAR), and aspartate 258. Arginine 234 is a catalytic residue. The active site involves glutamate 263. The active-site Proton donor is the histidine 295.

The protein belongs to the D-isomer specific 2-hydroxyacid dehydrogenase family.

The catalysed reaction is (R)-3-phenyllactate + NAD(+) = 3-phenylpyruvate + NADH + H(+). It catalyses the reaction (2R)-2-hydroxy-3-(4-hydroxyphenyl)propanoate + NAD(+) = 3-(4-hydroxyphenyl)pyruvate + NADH + H(+). The enzyme catalyses 3-(indol-3-yl)lactate + NAD(+) = indole-3-pyruvate + NADH + H(+). It functions in the pathway amino-acid degradation. In terms of biological role, essential for the reductive metabolism of L-phenylalanine, L-tyrosine and L-tryptophan. Catalyzes the conversion of phenylpyruvic acid to phenyllactic acid, 4-hydroxy-phenylpyruvic acid to 4-hydroxy-phenyllactic acid, and indolepyruvic acid to indolelactic acid. This Clostridium sporogenes (strain ATCC 15579) protein is Aromatic 2-oxoacid reductase.